A 338-amino-acid polypeptide reads, in one-letter code: L-serine dehydratase (338 aa).

The residue at position 39 (Lys39) is an N6-(pyridoxal phosphate)lysine.

Belongs to the serine/threonine dehydratase family. Pyridoxal 5'-phosphate serves as cofactor.

The protein resides in the cytoplasm. The catalysed reaction is L-serine = pyruvate + NH4(+). The protein operates within carbohydrate biosynthesis; gluconeogenesis. This Saccharomyces cerevisiae (strain RM11-1a) (Baker's yeast) protein is L-serine dehydratase (SDL1).